The sequence spans 501 residues: Ribose import ATP-binding protein RbsA (501 aa).

ABC transporter domains are found at residues 5 to 241 (LQLK…VGRK) and 252 to 495 (APGD…VGKL). 37 to 44 (GENGAGKS) lines the ATP pocket.

Belongs to the ABC transporter superfamily. Ribose importer (TC 3.A.1.2.1) family. In terms of assembly, the complex is composed of an ATP-binding protein (RbsA), two transmembrane proteins (RbsC) and a solute-binding protein (RbsB).

The protein resides in the cell inner membrane. The enzyme catalyses D-ribose(out) + ATP + H2O = D-ribose(in) + ADP + phosphate + H(+). Functionally, part of the ABC transporter complex RbsABC involved in ribose import. Responsible for energy coupling to the transport system. The chain is Ribose import ATP-binding protein RbsA from Escherichia coli O6:H1 (strain CFT073 / ATCC 700928 / UPEC).